The following is a 276-amino-acid chain: Large ribosomal subunit protein uL2 (276 aa).

The segment at 225–276 is disordered; that stretch reads MNPNDHPHGGGEGRNPIGRNPVTPWGKPALGAKTRKKKHPSNRFIVKRRGKK. The span at 257 to 276 shows a compositional bias: basic residues; it reads KTRKKKHPSNRFIVKRRGKK.

The protein belongs to the universal ribosomal protein uL2 family. Part of the 50S ribosomal subunit. Forms a bridge to the 30S subunit in the 70S ribosome.

Functionally, one of the primary rRNA binding proteins. Required for association of the 30S and 50S subunits to form the 70S ribosome, for tRNA binding and peptide bond formation. It has been suggested to have peptidyltransferase activity; this is somewhat controversial. Makes several contacts with the 16S rRNA in the 70S ribosome. The sequence is that of Large ribosomal subunit protein uL2 from Desulfitobacterium hafniense (strain Y51).